Reading from the N-terminus, the 321-residue chain is DNA repair and recombination protein RadA (321 aa).

111-118 (GEFGSGKT) contributes to the ATP binding site.

It belongs to the eukaryotic RecA-like protein family.

Its function is as follows. Involved in DNA repair and in homologous recombination. Binds and assemble on single-stranded DNA to form a nucleoprotein filament. Hydrolyzes ATP in a ssDNA-dependent manner and promotes DNA strand exchange between homologous DNA molecules. This Sulfolobus acidocaldarius (strain ATCC 33909 / DSM 639 / JCM 8929 / NBRC 15157 / NCIMB 11770) protein is DNA repair and recombination protein RadA.